A 396-amino-acid chain; its full sequence is Actin-related protein 6 (396 aa).

T2 is subject to N-acetylthreonine. An N6-acetyllysine modification is found at K260.

This sequence belongs to the actin family. ARP6 subfamily. Component of the chromatin-remodeling SRCAP complex composed of at least SRCAP, DMAP1, RUVBL1, RUVBL2, ACTL6A, YEATS4, ACTR6 and ZNHIT1. Interacts with CBX1, CBX3 and CBX5.

The protein resides in the cytoplasm. It localises to the cytoskeleton. Its subcellular location is the nucleus. The protein localises to the nucleolus. Required for formation and/or maintenance of proper nucleolar structure and function. Plays a dual role in the regulation of ribosomal DNA (rDNA) transcription. In the presence of high glucose, maintains active rDNA transcription through H2A.Z deposition and under glucose starvation, is required for the repression of rDNA transcription, and this function may be independent of H2A.Z. The polypeptide is Actin-related protein 6 (ACTR6) (Homo sapiens (Human)).